We begin with the raw amino-acid sequence, 63 residues long: uncharacterized protein (63 aa).

Basic residues predominate over residues 1-15; sequence MGRNHIHKNRDKNKQ. The disordered stretch occupies residues 1–63; it reads MGRNHIHKNR…ADNRAKKKSR (63 aa). Positions 30-44 are enriched in acidic residues; the sequence is GVYEEYSTELADADD. Positions 45 to 57 are enriched in basic and acidic residues; the sequence is REAQERAKAADNR.

This is an uncharacterized protein from Bacillus subtilis (strain 168).